A 405-amino-acid chain; its full sequence is Cytochrome P450 109 (405 aa).

Residue Cys-351 coordinates heme.

Belongs to the cytochrome P450 family. Heme is required as a cofactor.

Functionally, cytochromes P450 are a group of heme-thiolate monooxygenases. They oxidize a variety of structurally unrelated compounds, including steroids, fatty acids, and xenobiotics. The protein is Cytochrome P450 109 (cyp109) of Bacillus spizizenii (strain ATCC 23059 / NRRL B-14472 / W23) (Bacillus subtilis subsp. spizizenii).